A 119-amino-acid chain; its full sequence is ATP-dependent Clp protease adapter protein ClpS (119 aa).

The disordered stretch occupies residues Met1 to Asp24.

It belongs to the ClpS family. In terms of assembly, binds to the N-terminal domain of the chaperone ClpA.

Its function is as follows. Involved in the modulation of the specificity of the ClpAP-mediated ATP-dependent protein degradation. The protein is ATP-dependent Clp protease adapter protein ClpS of Gluconobacter oxydans (strain 621H) (Gluconobacter suboxydans).